Consider the following 751-residue polypeptide: E3 ubiquitin-protein ligase SMURF2 (751 aa).

In terms of domain architecture, C2 spans 1-119; it reads MSNQGSRRNG…TGYQRLDLCK (119 aa). The 34-residue stretch at 157–190 folds into the WW 1 domain; it reads NDLPDGWEERRTASGRIQYLNHITRTTQWERPTR. Polar residues predominate over residues 214 to 226; it reads GTNGASCGQTSDP. The tract at residues 214 to 236 is disordered; sequence GTNGASCGQTSDPRISERRVRSQ. WW domains are found at residues 251–284 and 297–330; these read PDLP…DPRV and GPLP…DPRL. Positions 417–751 constitute an HECT domain; that stretch reads RPKDLWKRLM…IEETCGFAVE (335 aa). Catalysis depends on cysteine 719, which acts as the Glycyl thioester intermediate.

It is found in the nucleus. The protein resides in the cytoplasm. It localises to the cell membrane. The protein localises to the membrane raft. It carries out the reaction S-ubiquitinyl-[E2 ubiquitin-conjugating enzyme]-L-cysteine + [acceptor protein]-L-lysine = [E2 ubiquitin-conjugating enzyme]-L-cysteine + N(6)-ubiquitinyl-[acceptor protein]-L-lysine.. The protein operates within protein modification; protein ubiquitination. E3 ubiquitin-protein ligase which accepts ubiquitin from an E2 ubiquitin-conjugating enzyme in the form of a thioester and then directly transfers the ubiquitin to targeted substrates. In Xenopus laevis (African clawed frog), this protein is E3 ubiquitin-protein ligase SMURF2 (smurf2).